The primary structure comprises 285 residues: Methanethiol S-methyltransferase 1 (285 aa).

The next 5 helical transmembrane spans lie at 55–75 (AYLV…GLVV), 88–108 (AEAV…HSVM), 132–152 (LFAS…PTVI), 162–182 (VTLV…TFII), and 224–244 (FIVA…FAAV).

It belongs to the nurim family.

It is found in the membrane. It carries out the reaction methanethiol + S-adenosyl-L-methionine = dimethyl sulfide + S-adenosyl-L-homocysteine + H(+). Its function is as follows. Catalyzes the methylation of methanethiol (MeSH) to yield dimethylsulphide (DMS). The chain is Methanethiol S-methyltransferase 1 from Bradyrhizobium diazoefficiens (strain JCM 10833 / BCRC 13528 / IAM 13628 / NBRC 14792 / USDA 110).